The following is a 140-amino-acid chain: Neuropeptide CCHamide-2 (140 aa).

The signal sequence occupies residues 1 to 22 (MAQMYLAVTIIALLAISHGVSA). Cysteines 26 and 33 form a disulfide. At histidine 37 the chain carries Histidine amide. The propeptide occupies 41–140 (SGDTSAMDQL…PDDGYYIESL (100 aa)).

Expressed in corpora cardiaca (CC), corpora allata (CA), antennal lobe (AL) and gnathal ganglion (GNG) (at protein level). Expression detected in few animals (at protein level).

The protein localises to the secreted. Functionally, ligand for the CCHamide-2 receptor CCHa2-R. The polypeptide is Neuropeptide CCHamide-2 (Agrotis ipsilon (Black cutworm moth)).